Reading from the N-terminus, the 426-residue chain is 6-Hydroxy-7-prenyldeoxybrevianamide E synthase notC' (426 aa).

A substrate-binding site is contributed by Glu-94. Residues Arg-105, Lys-191, and Tyr-193 each coordinate dimethylallyl diphosphate. Tyr-195 contacts substrate. 6 residues coordinate dimethylallyl diphosphate: Lys-267, Tyr-269, Gln-352, Tyr-354, Tyr-418, and Tyr-422.

The protein belongs to the tryptophan dimethylallyltransferase family.

It carries out the reaction 6-hydroxydeoxybrevianamide E + dimethylallyl diphosphate = notoamide S + diphosphate. Its pathway is alkaloid biosynthesis. In terms of biological role, prenyltransferase; part of the gene cluster that mediates the biosynthesis of notoamide, a fungal indole alkaloid that belongs to a family of natural products containing a characteristic bicyclo[2.2.2]diazaoctane core. The first step of notoamide biosynthesis involves coupling of L-proline and L-tryptophan by the bimodular NRPS notE', to produce cyclo-L-tryptophan-L-proline called brevianamide F. The reverse prenyltransferase notF' then acts as a deoxybrevianamide E synthase and converts brevianamide F to deoxybrevianamide E via reverse prenylation at C-2 of the indole ring leading to the bicyclo[2.2.2]diazaoctane core. Deoxybrevianamide E is further hydroxylated at C-6 of the indole ring, likely catalyzed by the cytochrome P450 monooxygenase notG', to yield 6-hydroxy-deoxybrevianamide E. 6-hydroxy-deoxybrevianamide E is a specific substrate of the prenyltransferase notC' for normal prenylation at C-7 to produce 6-hydroxy-7-prenyl-deoxybrevianamide, also called notoamide S. As the proposed pivotal branching point in notoamide biosynthesis, notoamide S can be diverted to notoamide E through an oxidative pyran ring closure putatively catalyzed by either notH' cytochrome P450 monooxygenase or the notD' FAD-linked oxidoreductase. This step would be followed by an indole 2,3-epoxidation-initiated pinacol-like rearrangement catalyzed by the notB' FAD-dependent monooxygenase leading to the formation of notoamide C and notoamide D. On the other hand notoamide S is converted to notoamide T by notH' (or notD'), a bifunctional oxidase that also functions as the intramolecular Diels-Alderase responsible for generation of (-)-notoamide T. To generate antipodal (+)-notoaminide T, notH (or notD) in Aspergillus strain MF297-2 is expected to catalyze a Diels-Alder reaction leading to the opposite stereochemistry. The remaining oxidoreductase notD' (or notH') likely catalyzes the oxidative pyran ring formation to yield (-)-stephacidin A. The FAD-dependent monooxygenase notI' is highly similar to notB' and is predicted to catalyze a similar conversion from (-)-stephacidin A to (+)-notoamide B via the 2,3-epoxidation of (-)-stephacidin A followed by a pinacol-type rearrangement. Finally, it remains unclear which enzyme could be responsible for the final hydroxylation steps leading to notoamide A and sclerotiamide. The chain is 6-Hydroxy-7-prenyldeoxybrevianamide E synthase notC' from Aspergillus versicolor.